A 203-amino-acid chain; its full sequence is Small ribosomal subunit protein uS4c (203 aa).

Positions 89–152 constitute an S4 RNA-binding domain; the sequence is MRLDNILFRL…QSRTLIQNSL (64 aa).

It belongs to the universal ribosomal protein uS4 family. In terms of assembly, part of the 30S ribosomal subunit. Contacts protein S5. The interaction surface between S4 and S5 is involved in control of translational fidelity.

It is found in the plastid. Its function is as follows. One of the primary rRNA binding proteins, it binds directly to 16S rRNA where it nucleates assembly of the body of the 30S subunit. With S5 and S12 plays an important role in translational accuracy. This is Small ribosomal subunit protein uS4c (rps4) from Orobanche minor (Small broomrape).